The primary structure comprises 908 residues: MEEGGRDKTPVQSQQPSATTPSGADEKSSGKERRDAGEKDKEQELSEEDKQLQDELEMLVERLGEKDTSLYRPALEELRRQIRSSTTSMTSVPKPLKFLRPHYGKLKEIYENMAPGENKCFAADIISVLAMTMSGERECLKYRLVGSQEELASWGHEYVRHLAGEVAKEWQELDDAEKAQREPLLTLVKEIVPYNMAHNAEHEACDLLMEIEQVDMLEKDIDENAYAKVCLYLTSCVNYVPEPENSALLRCALGVFRKFSRFPEALRLALMLNDMELVEDIFTSCKDVVVQKQMAFMLGRHGVFLELSEDVEEYEDLTEIMSNVQLNSNFLALARELDIMEPKVPDDIYKTHLENNRFGGSGSQVDSARMNLASSFVNGFVNAAFGQDKLLTDDGNKWLYKNKDHGMLSAAASLGMILLWDVDGGLTQIDKYLYSSEDYIKSGALLACGIVNSGVRNECDPALALLSDYVLHNSNTMRLGSIFGLGLAYAGSNREDVLTLLLPVMGDSKSSMEVAGVTALACGMIAVGSCNGDVTSTILQTIMEKSETELKDTYARWLPLGLGLNHLGKGEAIEAILAALEVVSEPFRSFANTLVDVCAYAGSGNVLKVQQLLHICSEHFDSKEKEEDKDKKEKKDKDKKEAPADMGAHQGVAVLGIALIAMGEEIGAEMALRTFGHLLRYGEPTLRRAVPLALALISVSNPRLNILDTLSKFSHDADPEVSYNSIFAMGMVGSGTNNARLAAMLRQLAQYHAKDPNNLFMVRLAQGLTHLGKGTLTLCPYHSDRQLMSQVAVAGLLTVLVSFLDVRNIILGKSHYVLYGLVAAMQPRMLVTFDEELRPLPVSVRVGQAVDVVGQAGKPKTITGFQTHTTPVLLAHGERAELATEEFLPVTPILEGFVILRKNPNYDL.

Methionine 1 is subject to N-acetylmethionine. Residues methionine 1 to glutamine 51 form a disordered region. Phosphothreonine occurs at positions 9 and 20. The segment covering proline 10 to serine 22 has biased composition (polar residues). Over residues alanine 24–glutamine 51 the composition is skewed to basic and acidic residues. Phosphoserine occurs at positions 29 and 147. Tyrosine 194 bears the Phosphotyrosine mark. Phosphoserine occurs at positions 361 and 363. 5 PC repeats span residues serine 409 to serine 442, glycine 443 to leucine 479, glycine 480 to valine 514, valine 517 to lysine 551, and leucine 560 to serine 589. An N6-acetyllysine modification is found at lysine 551. A compositionally biased stretch (basic and acidic residues) spans lysine 623–proline 643. Residues lysine 623 to aspartate 645 form a disordered region. 2 PC repeats span residues leucine 692–tyrosine 723 and alanine 742–asparagine 757. The required for interaction with UBLCP1 stretch occupies residues aspartate 708–asparagine 903.

The protein belongs to the proteasome subunit S2 family. As to quaternary structure, component of the 19S proteasome regulatory particle complex. The 26S proteasome consists of a 20S core particle (CP) and two 19S regulatory subunits (RP). The regulatory particle is made of a lid composed of 9 subunits, a base containing 6 ATPases and few additional components including PSMD2. Interacts with RPGRIP1L. Interacts with CRY1 in a KDM8-dependent manner. Interacts (via C-terminus) with phosphatase UBLCP1 (via ubiquitin-like domain); the interaction recruits UBLCP1 to the 19S regulatory particle where it dephosphorylates 19S subunit PSMC2/RPT1 which impairs PSMC2 ATPase activity and disrupts 26S proteasome assembly.

Component of the 26S proteasome, a multiprotein complex involved in the ATP-dependent degradation of ubiquitinated proteins. This complex plays a key role in the maintenance of protein homeostasis by removing misfolded or damaged proteins, which could impair cellular functions, and by removing proteins whose functions are no longer required. Therefore, the proteasome participates in numerous cellular processes, including cell cycle progression, apoptosis, or DNA damage repair. In terms of biological role, binds to the intracellular domain of tumor necrosis factor type 1 receptor. The binding domain of TRAP1 and TRAP2 resides outside the death domain of TNFR1. This chain is 26S proteasome non-ATPase regulatory subunit 2 (Psmd2), found in Mus musculus (Mouse).